The sequence spans 217 residues: 25 kDa ookinete surface antigen (217 aa).

Residues 1-16 form the signal peptide; sequence MNKLYSLFLFLFIQLS. Positions 30–59 constitute an EGF-like 1; truncated domain; that stretch reads CKRGFLIQMSGHLECKCENDLVLVNEETCE. EGF-like domains are found at residues 61-106, 106-150, and 153-193; these read KVLK…NVCI, IPNE…NKCS, and GETK…SICT. 9 disulfide bridges follow: Cys-65-Cys-80, Cys-74-Cys-92, Cys-94-Cys-105, Cys-110-Cys-120, Cys-115-Cys-133, Cys-135-Cys-149, Cys-157-Cys-168, Cys-161-Cys-177, and Cys-179-Cys-192. Residue Asn-112 is glycosylated (N-linked (GlcNAc...) asparagine). N-linked (GlcNAc...) asparagine glycosylation is found at Asn-165 and Asn-187. Ser-196 carries GPI-anchor amidated serine lipidation. Positions 197–217 are cleaved as a propeptide — removed in mature form; the sequence is AYNILNLSIMFILFSVCFFIM. Residue Asn-202 is glycosylated (N-linked (GlcNAc...) asparagine).

It localises to the cell membrane. This is 25 kDa ookinete surface antigen from Plasmodium falciparum (isolate NF54).